We begin with the raw amino-acid sequence, 1282 residues long: Indigoidine synthase (1282 aa).

Positions 24–379 (AQRVAEHPEA…GGIQLARGYL (356 aa)) are adenylation. Residues 937 to 1012 (APRTETEKEI…KLARRLEREV (76 aa)) enclose the Carrier domain. An O-(pantetheine 4'-phosphoryl)serine modification is found at Ser972. A thioesterase region spans residues 1030–1138 (RPVICWPGLG…APGSPKVRAE (109 aa)).

Belongs to the ATP-dependent AMP-binding enzyme family. It depends on pantetheine 4'-phosphate as a cofactor.

It catalyses the reaction 2 FMN + 2 L-glutamine + 2 ATP + O2 = indigoidine + 2 FMNH2 + 2 AMP + 2 diphosphate + 2 H2O. It carries out the reaction FMN + L-glutamine + ATP = 3-amino-1,5-dihydropyridine-2,6-dione + FMNH2 + AMP + diphosphate. The enzyme catalyses 2 3-amino-1,5-dihydropyridine-2,6-dione + O2 = indigoidine + 2 H2O. It participates in pigment biosynthesis. Its function is as follows. Nonribosomal peptide synthetase involved in the biosynthesis of the blue pigment indigoidine. Catalyzes the synthesis of the blue pigment using L-Gln as a substrate. Two glutamine molecules are cyclized and oxidized to form indigoidine. This chain is Indigoidine synthase, found in Streptomyces lavendulae.